Consider the following 355-residue polypeptide: UDP-3-O-acylglucosamine N-acyltransferase (355 aa).

The Proton acceptor role is filled by H252.

Belongs to the transferase hexapeptide repeat family. LpxD subfamily. As to quaternary structure, homotrimer.

The catalysed reaction is a UDP-3-O-[(3R)-3-hydroxyacyl]-alpha-D-glucosamine + a (3R)-hydroxyacyl-[ACP] = a UDP-2-N,3-O-bis[(3R)-3-hydroxyacyl]-alpha-D-glucosamine + holo-[ACP] + H(+). It functions in the pathway bacterial outer membrane biogenesis; LPS lipid A biosynthesis. In terms of biological role, catalyzes the N-acylation of UDP-3-O-acylglucosamine using 3-hydroxyacyl-ACP as the acyl donor. Is involved in the biosynthesis of lipid A, a phosphorylated glycolipid that anchors the lipopolysaccharide to the outer membrane of the cell. This Polynucleobacter necessarius subsp. necessarius (strain STIR1) protein is UDP-3-O-acylglucosamine N-acyltransferase.